The sequence spans 579 residues: 2-isopropylmalate synthase (579 aa).

The Pyruvate carboxyltransferase domain maps to 40–314 (PRWCAVDLRD…DPMIDFSDID (275 aa)). The Mg(2+) site is built by aspartate 49, histidine 253, histidine 255, and asparagine 289. The interval 456-579 (SDEEQAQWGR…VNRAVRDAQA (124 aa)) is regulatory domain.

This sequence belongs to the alpha-IPM synthase/homocitrate synthase family. LeuA type 2 subfamily. As to quaternary structure, homodimer. It depends on Mg(2+) as a cofactor.

It localises to the cytoplasm. It carries out the reaction 3-methyl-2-oxobutanoate + acetyl-CoA + H2O = (2S)-2-isopropylmalate + CoA + H(+). It functions in the pathway amino-acid biosynthesis; L-leucine biosynthesis; L-leucine from 3-methyl-2-oxobutanoate: step 1/4. Catalyzes the condensation of the acetyl group of acetyl-CoA with 3-methyl-2-oxobutanoate (2-ketoisovalerate) to form 3-carboxy-3-hydroxy-4-methylpentanoate (2-isopropylmalate). The chain is 2-isopropylmalate synthase from Paenarthrobacter aurescens (strain TC1).